The sequence spans 462 residues: Cysteine--tRNA ligase (462 aa).

C27 contributes to the Zn(2+) binding site. The short motif at P29 to N39 is the 'HIGH' region element. C211, H236, and E240 together coordinate Zn(2+). The 'KMSKS' region signature appears at K270 to S274. Residue K273 participates in ATP binding.

It belongs to the class-I aminoacyl-tRNA synthetase family. In terms of assembly, monomer. It depends on Zn(2+) as a cofactor.

It is found in the cytoplasm. The catalysed reaction is tRNA(Cys) + L-cysteine + ATP = L-cysteinyl-tRNA(Cys) + AMP + diphosphate. The polypeptide is Cysteine--tRNA ligase (Anaplasma phagocytophilum (strain HZ)).